The primary structure comprises 419 residues: Epothilone C/D epoxidase (419 aa).

Residues Ala-180 and Gly-304 each coordinate substrate. Cys-365 provides a ligand contact to heme.

This sequence belongs to the cytochrome P450 family. The cofactor is heme.

It catalyses the reaction epothilone C + 2 reduced [2Fe-2S]-[ferredoxin] + O2 + 2 H(+) = epothilone A + 2 oxidized [2Fe-2S]-[ferredoxin] + H2O. The enzyme catalyses epothilone D + 2 reduced [2Fe-2S]-[ferredoxin] + O2 + 2 H(+) = epothilone B + 2 oxidized [2Fe-2S]-[ferredoxin] + H2O. It functions in the pathway secondary metabolite biosynthesis; epothilone biosynthesis. Involved in the biosynthesis of epothilones, macrolactones which have a narrow anti-fungal spectrum and microtubule-stabilizing activity. Catalyzes the epoxidation of epothilones C and D to epothilones A and B, respectively. The chain is Epothilone C/D epoxidase (cyp167A1) from Sorangium cellulosum (Polyangium cellulosum).